We begin with the raw amino-acid sequence, 373 residues long: Protein phosphatase 1K, mitochondrial (373 aa).

The PPM-type phosphatase domain maps to 95 to 347 (KVGCSTQLGK…DNSTAIVVPF (253 aa)). Positions 128, 129, and 338 each coordinate Mg(2+).

This sequence belongs to the PP2C family. The cofactor is Mg(2+). It depends on Mn(2+) as a cofactor.

The protein resides in the mitochondrion matrix. The enzyme catalyses O-phospho-L-seryl-[protein] + H2O = L-seryl-[protein] + phosphate. It catalyses the reaction O-phospho-L-threonyl-[protein] + H2O = L-threonyl-[protein] + phosphate. This chain is Protein phosphatase 1K, mitochondrial (ppm1k), found in Xenopus laevis (African clawed frog).